Consider the following 146-residue polypeptide: Hemoglobin subunit beta (146 aa).

A Globin domain is found at 2-146; the sequence is PFSAHEEKLI…VAAALSVEYY (145 aa). Residues His-63 and His-92 each coordinate heme b.

The protein belongs to the globin family. As to quaternary structure, heterotetramer of two alpha chains and two beta chains. When oxygenated in vitro, exists virtually only in polymeric form. When deoxygenated, forms tetramers, octamers and larger polymers. As to expression, red blood cells.

Functionally, involved in oxygen transport from the lung to the various peripheral tissues. This Paleosuchus palpebrosus (Cuvier's smooth-fronted caiman) protein is Hemoglobin subunit beta.